The following is a 262-amino-acid chain: Small ribosomal subunit protein eS1 (262 aa).

It belongs to the eukaryotic ribosomal protein eS1 family. Component of the small ribosomal subunit. Mature ribosomes consist of a small (40S) and a large (60S) subunit. The 40S subunit contains about 32 different proteins and 1 molecule of RNA (18S). The 60S subunit contains about 42 different proteins and 3 molecules of RNA (28S, 5.8S and 5S).

It localises to the cytoplasm. Its function is as follows. Component of the ribosome, a large ribonucleoprotein complex responsible for the synthesis of proteins in the cell. The small ribosomal subunit (SSU) binds messenger RNAs (mRNAs) and translates the encoded message by selecting cognate aminoacyl-transfer RNA (tRNA) molecules. The large subunit (LSU) contains the ribosomal catalytic site termed the peptidyl transferase center (PTC), which catalyzes the formation of peptide bonds, thereby polymerizing the amino acids delivered by tRNAs into a polypeptide chain. The nascent polypeptides leave the ribosome through a tunnel in the LSU and interact with protein factors that function in enzymatic processing, targeting, and the membrane insertion of nascent chains at the exit of the ribosomal tunnel. The polypeptide is Small ribosomal subunit protein eS1 (Plasmodium falciparum (isolate 3D7)).